Reading from the N-terminus, the 250-residue chain is Ubiquinone/menaquinone biosynthesis C-methyltransferase UbiE (250 aa).

S-adenosyl-L-methionine-binding positions include Thr73, Asp94, 122–123 (NA), and Ser139.

It belongs to the class I-like SAM-binding methyltransferase superfamily. MenG/UbiE family.

It catalyses the reaction a 2-demethylmenaquinol + S-adenosyl-L-methionine = a menaquinol + S-adenosyl-L-homocysteine + H(+). It carries out the reaction a 2-methoxy-6-(all-trans-polyprenyl)benzene-1,4-diol + S-adenosyl-L-methionine = a 5-methoxy-2-methyl-3-(all-trans-polyprenyl)benzene-1,4-diol + S-adenosyl-L-homocysteine + H(+). It participates in quinol/quinone metabolism; menaquinone biosynthesis; menaquinol from 1,4-dihydroxy-2-naphthoate: step 2/2. Its pathway is cofactor biosynthesis; ubiquinone biosynthesis. In terms of biological role, methyltransferase required for the conversion of demethylmenaquinol (DMKH2) to menaquinol (MKH2) and the conversion of 2-polyprenyl-6-methoxy-1,4-benzoquinol (DDMQH2) to 2-polyprenyl-3-methyl-6-methoxy-1,4-benzoquinol (DMQH2). The sequence is that of Ubiquinone/menaquinone biosynthesis C-methyltransferase UbiE from Francisella tularensis subsp. mediasiatica (strain FSC147).